A 200-amino-acid chain; its full sequence is Coiled-coil domain-containing protein 28B (200 aa).

The residue at position 1 (M1) is an N-acetylmethionine. Residues 1 to 10 (MDDKKKKRSP) show a composition bias toward basic residues. A disordered region spans residues 1–49 (MDDKKKKRSPKPCLAQPAQAPGTLRRVPVPTSHSGSLALGLPHLPSPKQ). Residues S46 and S115 each carry the phosphoserine modification. Residues 141-152 (EEEDDEEEEDGV) show a composition bias toward acidic residues. The tract at residues 141 to 164 (EEEDDEEEEDGVTEGLPEEQKKTM) is disordered. Residues 158 to 183 (EEQKKTMADRNLDQLLSNLEDLSNSI) adopt a coiled-coil conformation.

As to quaternary structure, interacts with BBS1, BBS2, BBS4, BBS5, BBS6, BBS7 and TTC8/BBS8. Interacts with MAPKAP1/SIN1 isoform 1 and RICTOR.

It localises to the cytoplasm. The protein localises to the cytoskeleton. It is found in the microtubule organizing center. Its subcellular location is the centrosome. In terms of biological role, involved in ciliogenesis. Regulates cilia length through its interaction with MAPKAP1/SIN1 but independently of mTORC2 complex. Modulates mTORC2 complex assembly and function, possibly enhances AKT1 phosphorylation. Does not seem to modulate assembly and function of mTORC1 complex. In Homo sapiens (Human), this protein is Coiled-coil domain-containing protein 28B (CCDC28B).